The following is a 266-amino-acid chain: MATVPEPINEVMAYYSDENELLFEVDGPKQMKSCTQHLDLGSMGDGNIQLQISHQLYNKSFRQVVSVIVAMEKLRSRAYEHVFRDDDLRSILSFIFEEEPVIFETSSDELLCDAAVQSVKCKLQDREQKSLVLDSPCVLKALHLPSQEMSREVVFCMSFVQGEERDNKIPVALGIRDKNLYLSCVKKGDTPTLQLEEVDPKVYPKRNMEKRFVFYKTEIKNTVEFESVLYPNWYISTSQIEEKPVFLGRFRGGQDITDFRMETLSP.

The propeptide occupies 1–113 (MATVPEPINE…ETSSDELLCD (113 aa)).

It belongs to the IL-1 family. Monomer. In its precursor form, weakly interacts with full-length MEFV; the mature cytokine does not interact at all. Interacts with integrins ITGAV:ITGBV and ITGA5:ITGB1; integrin-binding is required for IL1B signaling. Interacts with cargo receptor TMED10; the interaction is direct and is required for the secretion of IL1B mature form. Interacts with HSP90AB1; the interaction facilitates cargo translocation into the ERGIC. Interacts with HSP90B1; the interaction facilitates cargo translocation into the ERGIC.

Its subcellular location is the cytoplasm. It is found in the cytosol. It localises to the secreted. The protein localises to the lysosome. The protein resides in the extracellular exosome. Its function is as follows. Potent pro-inflammatory cytokine. Initially discovered as the major endogenous pyrogen, induces prostaglandin synthesis, neutrophil influx and activation, T-cell activation and cytokine production, B-cell activation and antibody production, and fibroblast proliferation and collagen production. Promotes Th17 differentiation of T-cells. Synergizes with IL12/interleukin-12 to induce IFNG synthesis from T-helper 1 (Th1) cells. Plays a role in angiogenesis by inducing VEGF production synergistically with TNF and IL6. Involved in transduction of inflammation downstream of pyroptosis: its mature form is specifically released in the extracellular milieu by passing through the gasdermin-D (GSDMD) pore. In Ovis aries (Sheep), this protein is Interleukin-1 beta (IL1B).